The sequence spans 143 residues: Large ribosomal subunit protein bL17 (143 aa).

This sequence belongs to the bacterial ribosomal protein bL17 family. In terms of assembly, part of the 50S ribosomal subunit. Contacts protein L32.

The polypeptide is Large ribosomal subunit protein bL17 (Chelativorans sp. (strain BNC1)).